We begin with the raw amino-acid sequence, 147 residues long: UPF0306 protein YhbP (147 aa).

The protein belongs to the UPF0306 family.

The sequence is that of UPF0306 protein YhbP from Escherichia coli O17:K52:H18 (strain UMN026 / ExPEC).